Here is a 357-residue protein sequence, read N- to C-terminus: UDP-3-O-acylglucosamine N-acyltransferase (357 aa).

The active-site Proton acceptor is His-251.

Belongs to the transferase hexapeptide repeat family. LpxD subfamily. Homotrimer.

It catalyses the reaction a UDP-3-O-[(3R)-3-hydroxyacyl]-alpha-D-glucosamine + a (3R)-hydroxyacyl-[ACP] = a UDP-2-N,3-O-bis[(3R)-3-hydroxyacyl]-alpha-D-glucosamine + holo-[ACP] + H(+). It functions in the pathway bacterial outer membrane biogenesis; LPS lipid A biosynthesis. Its function is as follows. Catalyzes the N-acylation of UDP-3-O-acylglucosamine using 3-hydroxyacyl-ACP as the acyl donor. Is involved in the biosynthesis of lipid A, a phosphorylated glycolipid that anchors the lipopolysaccharide to the outer membrane of the cell. The sequence is that of UDP-3-O-acylglucosamine N-acyltransferase from Ralstonia pickettii (strain 12J).